A 68-amino-acid chain; its full sequence is Venom-like beta-defensin (68 aa).

An N-terminal signal peptide occupies residues methionine 1–valine 24. Intrachain disulfides connect cysteine 33/cysteine 60, cysteine 40/cysteine 54, and cysteine 47/cysteine 61.

Highly expressed in intestine, liver and spleen and expressed at lower levels in brain, kidney, lung, testis and venom gland.

The protein localises to the secreted. Functionally, potent antimicrobial peptide that displays activity against S.aureus and P.aeruginosa. Does not inhibit growth of E.coli. The chain is Venom-like beta-defensin from Ornithorhynchus anatinus (Duckbill platypus).